Here is a 76-residue protein sequence, read N- to C-terminus: Sec-independent protein translocase protein TatA (76 aa).

A helical membrane pass occupies residues 1–21; it reads MGSFSIWHWLVVLAIVVLVFG. The segment at 41-76 is disordered; sequence EGMKGAEEESTPPPPAQQVTGHSIKSEIEEKDQTKV. Positions 64-76 are enriched in basic and acidic residues; that stretch reads IKSEIEEKDQTKV.

The protein belongs to the TatA/E family. In terms of assembly, the Tat system comprises two distinct complexes: a TatABC complex, containing multiple copies of TatA, TatB and TatC subunits, and a separate TatA complex, containing only TatA subunits. Substrates initially bind to the TatABC complex, which probably triggers association of the separate TatA complex to form the active translocon.

The protein localises to the cell inner membrane. Its function is as follows. Part of the twin-arginine translocation (Tat) system that transports large folded proteins containing a characteristic twin-arginine motif in their signal peptide across membranes. TatA could form the protein-conducting channel of the Tat system. This chain is Sec-independent protein translocase protein TatA, found in Nitrosomonas europaea (strain ATCC 19718 / CIP 103999 / KCTC 2705 / NBRC 14298).